The sequence spans 525 residues: NAD(P)H-quinone oxidoreductase subunit 2 (525 aa).

14 consecutive transmembrane segments (helical) span residues 14–34, 42–62, 78–98, 117–137, 167–187, 201–221, 240–260, 276–296, 302–322, 330–350, 374–394, 396–416, 462–482, and 494–514; these read AIWPEVVVTLTLLIVLVVDLV, SLPALSLFGLLGALVTLVLQW, PVSILFRGLVVATAALTVMMA, LTATLGGMFLAGATDLIMVFV, LLTGASSTAIFLYGMSLLYGL, LANAGLVGILALVFCLGGIGF, PTPVVAFLSVGSKAAGFALAI, AVLSVLAILTMVLGNVVAIAQ, LLAYSSIGQAGFVLIGLVAGT, IFYLMVYLAMNLGAFLCVTLF, LCLSICLLSLGGLPPLAGFFG, LYLFWAGWQAGEYTLVLVGLV, VGMVVTLVATIFAGILSNPLF, and FLGFPTAQAFAPGSASPSLAV.

The protein belongs to the complex I subunit 2 family. NDH-1 can be composed of about 15 different subunits; different subcomplexes with different compositions have been identified which probably have different functions.

It is found in the cellular thylakoid membrane. It catalyses the reaction a plastoquinone + NADH + (n+1) H(+)(in) = a plastoquinol + NAD(+) + n H(+)(out). It carries out the reaction a plastoquinone + NADPH + (n+1) H(+)(in) = a plastoquinol + NADP(+) + n H(+)(out). NDH-1 shuttles electrons from an unknown electron donor, via FMN and iron-sulfur (Fe-S) centers, to quinones in the respiratory and/or the photosynthetic chain. The immediate electron acceptor for the enzyme in this species is believed to be plastoquinone. Couples the redox reaction to proton translocation, and thus conserves the redox energy in a proton gradient. Cyanobacterial NDH-1 also plays a role in inorganic carbon-concentration. The protein is NAD(P)H-quinone oxidoreductase subunit 2 of Synechococcus sp. (strain JA-3-3Ab) (Cyanobacteria bacterium Yellowstone A-Prime).